The primary structure comprises 348 residues: MAKQKLTQNQKRRIHSNNAKALDRHRRQTKKQIDWQEDMLGETQDGVVVTRYSMHADVENAQGEVFRCNLRRTLAGVVVGDLVIWRQGHEKLQGISGVIEAVKPRKNELSRPDYYDGLKVMASNIDRIIIVSAVLPALSLNIIDRYLVICETANIPPVIVLNKIDLLSAEARQEAEQQLKIYRDIGYRTLMISAETGENMEKLTALLSQGTSIFVGQSGVGKSSLVNQIMPEVNAQTAEISENSGLGQHTTTSSRLYHLPQGGDLIDSPGIREFGLWHLDADQITKGYREFRHFLGACKFRDCKHLNDPQCALREAVEQGKIHPVRFDNYHRLISSKDEAKSQRHFTM.

The tract at residues 1–32 (MAKQKLTQNQKRRIHSNNAKALDRHRRQTKKQ) is disordered. A CP-type G domain is found at 106–274 (KNELSRPDYY…LIDSPGIREF (169 aa)). Residues 162 to 165 (NKID) and 216 to 224 (GQSGVGKSS) contribute to the GTP site. Residues Cys298, Cys303, His305, and Cys311 each contribute to the Zn(2+) site.

Belongs to the TRAFAC class YlqF/YawG GTPase family. RsgA subfamily. Monomer. Associates with 30S ribosomal subunit, binds 16S rRNA. It depends on Zn(2+) as a cofactor.

It is found in the cytoplasm. Its function is as follows. One of several proteins that assist in the late maturation steps of the functional core of the 30S ribosomal subunit. Helps release RbfA from mature subunits. May play a role in the assembly of ribosomal proteins into the subunit. Circularly permuted GTPase that catalyzes slow GTP hydrolysis, GTPase activity is stimulated by the 30S ribosomal subunit. This chain is Small ribosomal subunit biogenesis GTPase RsgA, found in Actinobacillus succinogenes (strain ATCC 55618 / DSM 22257 / CCUG 43843 / 130Z).